Here is a 205-residue protein sequence, read N- to C-terminus: MPVVFVAASKLPTPFATFTMHGFLDEATGREHVVLSLGDIADGQPVLGRLHSECLTGDALFSQRCDCGSQLEAALQAIAREGRGVLLYLRQEGRGIGLLNKIRAYELQDGGADTVEANERLGFAADQRDYAMCLPMLEHLGVKSLRLMTNNPRKVKALTDMNIVVAERVPLHTGHNPHNRYYLATKAGKLGHMLGNEHQGEAPQA.

Residue 49 to 53 participates in GTP binding; it reads RLHSE. Residues Cys-54, Cys-65, and Cys-67 each contribute to the Zn(2+) site. GTP contacts are provided by residues Gln-70, 92 to 94, and Thr-114; that span reads EGR. Catalysis depends on Asp-126, which acts as the Proton acceptor. The Nucleophile role is filled by Arg-128. Positions 149 and 154 each coordinate GTP.

It belongs to the GTP cyclohydrolase II family. It depends on Zn(2+) as a cofactor.

It carries out the reaction GTP + 4 H2O = 2,5-diamino-6-hydroxy-4-(5-phosphoribosylamino)-pyrimidine + formate + 2 phosphate + 3 H(+). It functions in the pathway cofactor biosynthesis; riboflavin biosynthesis; 5-amino-6-(D-ribitylamino)uracil from GTP: step 1/4. Catalyzes the conversion of GTP to 2,5-diamino-6-ribosylamino-4(3H)-pyrimidinone 5'-phosphate (DARP), formate and pyrophosphate. This Pseudomonas putida (strain GB-1) protein is GTP cyclohydrolase-2.